A 928-amino-acid chain; its full sequence is Protein naked cuticle (928 aa).

Polar residues predominate over residues 68–80; that stretch reads IITTPPGNASGAG. Positions 68–133 are disordered; the sequence is IITTPPGNAS…SNGKHGKYSN (66 aa). The span at 84–101 shows a compositional bias: basic residues; that stretch reads QSHHQTNHHSSGRSHPGH. Polar residues predominate over residues 120–133; it reads ISSTSNGKHGKYSN. Positions 177-253 are interaction with dsh; it reads EFTCDVSVEG…TVSPEGKSKS (77 aa). The EF-hand domain occupies 188 to 224; it reads KSSQPLQFSFTFYDLDGHHGKITKDDIVGIVYTIYES. Residues 227-372 form an important for binding to zinc region; that stretch reads KSVVVPHCGS…ARYHQKNNSR (146 aa). 5 disordered regions span residues 291-368, 462-543, 578-600, 614-668, and 779-825; these read GVGS…YHQK, VGND…KSAE, NVSPIRQPAAQQQPQQQQRQRCN, PVAQ…HPQP, and LQQK…GSKI. Basic residues predominate over residues 307-317; that stretch reads RRQHRYRPRKL. 3 positions are modified to phosphoserine: S320, S327, and S329. Residues 353-368 are compositionally biased toward basic residues; that stretch reads GKSHHHQSQSARYHQK. Over residues 484–493 the composition is skewed to polar residues; sequence QPQSLNHKSA. Over residues 525-538 the composition is skewed to low complexity; the sequence is HQHQQQNQQQQQQQ. A required for nuclear localization and inhibition of Wnt signaling region spans residues 543–572; sequence ECWKSALNRNDLISIIRESMEKNRLCFQLN. 2 stretches are compositionally biased toward low complexity: residues 583–598 and 624–649; these read RQPAAQQQPQQQQRQR and SPPTAEPTTPSIPAAPPAIEVNGQQH. A compositionally biased stretch (basic residues) spans 650 to 663; sequence HPTHPTHPSHHNHH. The segment covering 802–811 has biased composition (basic and acidic residues); sequence QPKDASRSEQ. The span at 812–822 shows a compositional bias: polar residues; the sequence is RPPTSNSSSAG.

It belongs to the NKD family. In terms of assembly, interacts with dsh. This interaction may be stabilized by zinc.

Its subcellular location is the cell membrane. It is found in the cytoplasm. The protein localises to the nucleus. In terms of biological role, cell autonomous antagonist of the canonical Wnt signaling pathway. May activate a second Wnt signaling pathway that controls planar cell polarity. Required for neuroblast specification. The protein is Protein naked cuticle (nkd) of Drosophila melanogaster (Fruit fly).